Consider the following 286-residue polypeptide: 2-hydroxy-6-oxo-6-phenylhexa-2,4-dienoate hydrolase (286 aa).

Substrate-binding positions include G42 to G43, N51, K111, S180, and R190. Positions N173–H271 constitute an AB hydrolase-1 domain. H265 serves as the catalytic Proton acceptor. W266 contacts substrate.

This sequence belongs to the AB hydrolase superfamily. BphD family. As to quaternary structure, homodimer.

The enzyme catalyses 2,6-dioxo-6-phenylhexa-3-enoate + H2O = 2-oxopent-4-enoate + benzoate + H(+). Its pathway is xenobiotic degradation; biphenyl degradation; 2-hydroxy-2,4-pentadienoate and benzoate from biphenyl: step 4/4. Catalyzes an unusual C-C bond hydrolysis of 2-hydroxy-6-oxo-6-phenylhexa-2,4-dienoic acid (HOPDA) to produce benzoic acid and 2-hydroxy-2,4-pentadienoic acid (HPD). This is 2-hydroxy-6-oxo-6-phenylhexa-2,4-dienoate hydrolase from Delftia acidovorans (Pseudomonas acidovorans).